The chain runs to 61 residues: Small ribosomal subunit protein uS14 (61 aa).

C24, C27, C40, and C43 together coordinate Zn(2+).

This sequence belongs to the universal ribosomal protein uS14 family. Zinc-binding uS14 subfamily. As to quaternary structure, part of the 30S ribosomal subunit. Contacts proteins S3 and S10. Zn(2+) is required as a cofactor.

In terms of biological role, binds 16S rRNA, required for the assembly of 30S particles and may also be responsible for determining the conformation of the 16S rRNA at the A site. The chain is Small ribosomal subunit protein uS14 from Herpetosiphon aurantiacus (strain ATCC 23779 / DSM 785 / 114-95).